The chain runs to 259 residues: Imidazole glycerol phosphate synthase subunit HisF (259 aa).

Residues Asp-11 and Asp-130 contribute to the active site.

Belongs to the HisA/HisF family. Heterodimer of HisH and HisF.

The protein resides in the cytoplasm. The catalysed reaction is 5-[(5-phospho-1-deoxy-D-ribulos-1-ylimino)methylamino]-1-(5-phospho-beta-D-ribosyl)imidazole-4-carboxamide + L-glutamine = D-erythro-1-(imidazol-4-yl)glycerol 3-phosphate + 5-amino-1-(5-phospho-beta-D-ribosyl)imidazole-4-carboxamide + L-glutamate + H(+). Its pathway is amino-acid biosynthesis; L-histidine biosynthesis; L-histidine from 5-phospho-alpha-D-ribose 1-diphosphate: step 5/9. IGPS catalyzes the conversion of PRFAR and glutamine to IGP, AICAR and glutamate. The HisF subunit catalyzes the cyclization activity that produces IGP and AICAR from PRFAR using the ammonia provided by the HisH subunit. The protein is Imidazole glycerol phosphate synthase subunit HisF of Shewanella amazonensis (strain ATCC BAA-1098 / SB2B).